The chain runs to 576 residues: Potassium-transporting ATPase potassium-binding subunit (576 aa).

Transmembrane regions (helical) follow at residues 4–24, 65–85, 136–156, 179–199, 257–277, 288–308, 341–361, 371–391, 393–413, 430–450, 497–517, and 540–560; these read QAWI…WPLG, AYAL…YALQ, ALGV…FALI, VYVL…QGVI, LSNF…VFAF, GALL…VTSL, FGIA…CGAV, LGGA…GGVG, GLYG…LMIG, MTAV…AVAL, LLLA…VLAI, and LFVV…YVPA.

It belongs to the KdpA family. The system is composed of three essential subunits: KdpA, KdpB and KdpC.

The protein resides in the cell inner membrane. Functionally, part of the high-affinity ATP-driven potassium transport (or Kdp) system, which catalyzes the hydrolysis of ATP coupled with the electrogenic transport of potassium into the cytoplasm. This subunit binds the periplasmic potassium ions and delivers the ions to the membrane domain of KdpB through an intramembrane tunnel. The protein is Potassium-transporting ATPase potassium-binding subunit of Methylibium petroleiphilum (strain ATCC BAA-1232 / LMG 22953 / PM1).